A 177-amino-acid chain; its full sequence is Large ribosomal subunit protein uL6 (177 aa).

This sequence belongs to the universal ribosomal protein uL6 family. In terms of assembly, part of the 50S ribosomal subunit.

Its function is as follows. This protein binds to the 23S rRNA, and is important in its secondary structure. It is located near the subunit interface in the base of the L7/L12 stalk, and near the tRNA binding site of the peptidyltransferase center. This Yersinia pseudotuberculosis serotype O:1b (strain IP 31758) protein is Large ribosomal subunit protein uL6.